The primary structure comprises 128 residues: Small ribosomal subunit protein uS11 (128 aa).

Belongs to the universal ribosomal protein uS11 family. As to quaternary structure, part of the 30S ribosomal subunit. Interacts with proteins S7 and S18. Binds to IF-3.

Functionally, located on the platform of the 30S subunit, it bridges several disparate RNA helices of the 16S rRNA. Forms part of the Shine-Dalgarno cleft in the 70S ribosome. This chain is Small ribosomal subunit protein uS11, found in Chromohalobacter salexigens (strain ATCC BAA-138 / DSM 3043 / CIP 106854 / NCIMB 13768 / 1H11).